The primary structure comprises 319 residues: ATP-dependent 6-phosphofructokinase (319 aa).

Residue Gly-11 participates in ATP binding. 21–25 (RSIAR) contributes to the ADP binding site. ATP-binding positions include 72 to 73 (RC) and 102 to 105 (GDGS). Residue Asp-103 coordinates Mg(2+). 125–127 (TID) serves as a coordination point for substrate. Residue Asp-127 is the Proton acceptor of the active site. Arg-154 is an ADP binding site. Substrate is bound by residues Arg-162 and 169-171 (MGR). ADP is bound by residues 185–187 (GAE), Arg-211, and 213–215 (KLH). Substrate is bound by residues Glu-222, Lys-243, and 249 to 252 (HVQR).

This sequence belongs to the phosphofructokinase type A (PFKA) family. ATP-dependent PFK group I subfamily. Prokaryotic clade 'B1' sub-subfamily. As to quaternary structure, homotetramer. Mg(2+) is required as a cofactor.

The protein resides in the cytoplasm. It carries out the reaction beta-D-fructose 6-phosphate + ATP = beta-D-fructose 1,6-bisphosphate + ADP + H(+). Its pathway is carbohydrate degradation; glycolysis; D-glyceraldehyde 3-phosphate and glycerone phosphate from D-glucose: step 3/4. With respect to regulation, allosterically activated by ADP and other diphosphonucleosides, and allosterically inhibited by phosphoenolpyruvate. Its function is as follows. Catalyzes the phosphorylation of D-fructose 6-phosphate to fructose 1,6-bisphosphate by ATP, the first committing step of glycolysis. The sequence is that of ATP-dependent 6-phosphofructokinase from Finegoldia magna (strain ATCC 29328 / DSM 20472 / WAL 2508) (Peptostreptococcus magnus).